Reading from the N-terminus, the 153-residue chain is Histone H2A (153 aa).

2 disordered regions span residues 1-27 (MDTG…VSRS) and 131-153 (KAAA…PKKA). The segment covering 132–147 (AAAAATKEPKSPAKAT) has biased composition (low complexity). Positions 149 to 152 (SPKK) match the SPKK motif motif.

Belongs to the histone H2A family. As to quaternary structure, the nucleosome is a histone octamer containing two molecules each of H2A, H2B, H3 and H4 assembled in one H3-H4 heterotetramer and two H2A-H2B heterodimers. The octamer wraps approximately 147 bp of DNA.

It is found in the nucleus. Its subcellular location is the chromosome. In terms of biological role, core component of nucleosome. Nucleosomes wrap and compact DNA into chromatin, limiting DNA accessibility to the cellular machineries which require DNA as a template. Histones thereby play a central role in transcription regulation, DNA repair, DNA replication and chromosomal stability. DNA accessibility is regulated via a complex set of post-translational modifications of histones, also called histone code, and nucleosome remodeling. In Euphorbia esula (Leafy spurge), this protein is Histone H2A.